Here is a 503-residue protein sequence, read N- to C-terminus: MDFSIKGCDWSKGEAKGFLTGKSDCIVLGIFEAQTLSGAALDIDTATKGLISRVVKAGDMDGKRGKTLFLHEVSGIGASRVLLVGLGKQDAFNQKAYNDAATTAWRALLATKVVQVTFSLAQLPVDERSSDWGVRAAILALRNETYRFTQMKSKPEPASHTLKRVVFSVDPADEKAAKVAIKQAVALANGMDLTRDLGNLPGNVCTPIYLGNTAKKIAKDWGLKAEVLGLKQIQALKMGSFLSVARASVEPPQFIVLHYQGAAAKAAPVVLVGKGITFDTGGISLKPGEGMDEMKYDMCGAGSVLGTMRAVAEMGLKINVVAIVPTCENMPGGNATKPGDIVTSMKGLTIEVLNTDAEGRLILCDALTYAERFKPAAVIDVATLTGACVIALGGHNSGLFSTNDALAGELLDASREANDPAWRMPLDDEYQDQLKSNFADLANIGGRPAGAVTAACFLSRFTESYPWAHLDIAGTAWKGGAAKGATGRPVPLLAQFLIDRAGQ.

2 residues coordinate Mn(2+): Lys-274 and Asp-279. Lys-286 is a catalytic residue. Mn(2+) contacts are provided by Asp-297, Asp-356, and Glu-358. The active site involves Arg-360.

The protein belongs to the peptidase M17 family. It depends on Mn(2+) as a cofactor.

It is found in the cytoplasm. The enzyme catalyses Release of an N-terminal amino acid, Xaa-|-Yaa-, in which Xaa is preferably Leu, but may be other amino acids including Pro although not Arg or Lys, and Yaa may be Pro. Amino acid amides and methyl esters are also readily hydrolyzed, but rates on arylamides are exceedingly low.. It carries out the reaction Release of an N-terminal amino acid, preferentially leucine, but not glutamic or aspartic acids.. Its function is as follows. Presumably involved in the processing and regular turnover of intracellular proteins. Catalyzes the removal of unsubstituted N-terminal amino acids from various peptides. The protein is Probable cytosol aminopeptidase of Burkholderia orbicola (strain AU 1054).